The chain runs to 277 residues: Large ribosomal subunit protein uL2 (277 aa).

Composition is skewed to basic residues over residues 210-219 (RARWAGKRPQ) and 259-277 (TRSK…RNKK). The interval 210–277 (RARWAGKRPQ…KFIVRSRNKK (68 aa)) is disordered.

This sequence belongs to the universal ribosomal protein uL2 family. As to quaternary structure, part of the 50S ribosomal subunit. Forms a bridge to the 30S subunit in the 70S ribosome.

In terms of biological role, one of the primary rRNA binding proteins. Required for association of the 30S and 50S subunits to form the 70S ribosome, for tRNA binding and peptide bond formation. It has been suggested to have peptidyltransferase activity; this is somewhat controversial. Makes several contacts with the 16S rRNA in the 70S ribosome. This Ligilactobacillus salivarius (strain UCC118) (Lactobacillus salivarius) protein is Large ribosomal subunit protein uL2.